The following is a 31-amino-acid chain: Photosystem II reaction center protein T (31 aa).

Residues 3–23 (SFAYILILTLAIATLFFAIAF) form a helical membrane-spanning segment.

The protein belongs to the PsbT family. PSII is composed of 1 copy each of membrane proteins PsbA, PsbB, PsbC, PsbD, PsbE, PsbF, PsbH, PsbI, PsbJ, PsbK, PsbL, PsbM, PsbT, PsbX, PsbY, PsbZ, Psb30/Ycf12, peripheral proteins PsbO, CyanoQ (PsbQ), PsbU, PsbV and a large number of cofactors. It forms dimeric complexes.

Its subcellular location is the cellular thylakoid membrane. Functionally, found at the monomer-monomer interface of the photosystem II (PS II) dimer, plays a role in assembly and dimerization of PSII. PSII is a light-driven water plastoquinone oxidoreductase, using light energy to abstract electrons from H(2)O, generating a proton gradient subsequently used for ATP formation. The protein is Photosystem II reaction center protein T of Synechococcus sp. (strain WH7803).